A 71-amino-acid chain; its full sequence is Gas vesicle protein A (71 aa).

The interval 12 to 22 is alpha helix 1; it reads LAEVIDRILDK. The tract at residues 23–32 is beta-strand 1; that stretch reads GIVIDAWVRV. Positions 33-36 are beta turn; that stretch reads SLVG. Residues 37–46 form a beta-strand 2 region; the sequence is IELLAIEARI. An alpha helix 2 region spans residues 47 to 70; the sequence is VIASVETYLKYAEAVGLTQSAAVP.

The protein belongs to the gas vesicle GvpA family. The gas vesicle shell is 2 nm thick and consists of a single layer of this protein. It forms helical ribs nearly perpendicular to the long axis of the vesicle.

Its subcellular location is the gas vesicle shell. Functionally, gas vesicles (GV) are hollow, gas filled proteinaceous nanostructures found in some microorganisms. During planktonic growth they allow positioning of the organism at a favorable depth for light or nutrient acquisition. GVs are highly permeable to gas. GvpA forms the protein shell. The ratio of GvpA:GvpC is estimated to be 33:1 and more recently 25:1. This chain is Gas vesicle protein A, found in Dolichospermum flosaquae (Anabaena flos-aquae).